The sequence spans 201 residues: Large ribosomal subunit protein eL15 (201 aa).

This sequence belongs to the eukaryotic ribosomal protein eL15 family.

This chain is Large ribosomal subunit protein eL15 (RPL15), found in Quercus suber (Cork oak).